The chain runs to 115 residues: DNA-binding protein NP_4416A (115 aa).

The span at 1 to 11 shows a compositional bias: acidic residues; it reads MSGEPTDEDLE. Residues 1 to 46 are disordered; the sequence is MSGEPTDEDLEELRKKKMEQLKEQGGEGQSEAAEAQRQQAEAQKKA. The span at 12–25 shows a compositional bias: basic and acidic residues; the sequence is ELRKKKMEQLKEQG. Residues 29–41 are compositionally biased toward low complexity; that stretch reads QSEAAEAQRQQAE.

The protein belongs to the PDCD5 family.

The chain is DNA-binding protein NP_4416A from Natronomonas pharaonis (strain ATCC 35678 / DSM 2160 / CIP 103997 / JCM 8858 / NBRC 14720 / NCIMB 2260 / Gabara) (Halobacterium pharaonis).